Reading from the N-terminus, the 109-residue chain is Glutaredoxin-C13 (109 aa).

The Glutaredoxin domain occupies 2-108; that stretch reads AEMVARLASE…PMLKNAGALW (107 aa). Residues cysteine 22 and cysteine 25 are joined by a disulfide bond. Residues 106–109 carry the Responsive for interaction with TGA factors motif; the sequence is ALWL.

The protein belongs to the glutaredoxin family. CC-type subfamily.

It localises to the cytoplasm. Its subcellular location is the nucleus. Its function is as follows. Has a glutathione-disulfide oxidoreductase activity in the presence of NADPH and glutathione reductase. Reduces low molecular weight disulfides and proteins. This is Glutaredoxin-C13 (GRXC13) from Oryza sativa subsp. japonica (Rice).